The sequence spans 155 residues: Transcriptional repressor NrdR (155 aa).

The segment at cysteine 3–cysteine 34 is a zinc-finger region. The ATP-cone domain occupies proline 49 to glutamate 139.

It belongs to the NrdR family. Zn(2+) serves as cofactor.

In terms of biological role, negatively regulates transcription of bacterial ribonucleotide reductase nrd genes and operons by binding to NrdR-boxes. The polypeptide is Transcriptional repressor NrdR (Janthinobacterium sp. (strain Marseille) (Minibacterium massiliensis)).